The chain runs to 485 residues: Cholesterol 16,22-dihydroxylase CYP90G4 (485 aa).

Residues 4–24 (VVILFFLFPTLLVLVVAVLGL) traverse the membrane as a helical segment. A heme-binding site is contributed by cysteine 432.

It belongs to the cytochrome P450 family. In terms of tissue distribution, mainly expressed in leaves and, at low levels, in roots and stems.

Its subcellular location is the membrane. It carries out the reaction cholesterol + 2 reduced [NADPH--hemoprotein reductase] + 2 O2 = (16S,22S)-dihydroxycholesterol + 2 oxidized [NADPH--hemoprotein reductase] + 2 H2O + 2 H(+). It participates in steroid metabolism; cholesterol metabolism. In terms of biological role, involved in the biosynthesis of spiroketal steroid and saponin natural products from cholesterol such as diosgenin and analogs (e.g. furostanol and spirostanol), plant defense compounds used as main precursors for the industrial production of steroid hormones. During the 5,6-spiroketalization of cholesterol, catalyzes the hydroxylation of cholesterol to form 16S,22S-dihydroxycholesterol and, possibly, the subsequent conversion of 16S,22S-dihydroxycholesterol into 16-oxo-22-hydroxy-cholesterol and 16-hydroxy-22-oxo-cholesterol. 16-hydroxy-22-oxo-cholesterol submit a spontaneous reaction leading to the production of furostanol-type steroid diastereomers, precursors of diosgenin. The polypeptide is Cholesterol 16,22-dihydroxylase CYP90G4 (Paris polyphylla (Daiswa polyphylla)).